A 178-amino-acid polypeptide reads, in one-letter code: Adenine phosphoribosyltransferase (178 aa).

The protein belongs to the purine/pyrimidine phosphoribosyltransferase family. In terms of assembly, homodimer.

The protein localises to the cytoplasm. It catalyses the reaction AMP + diphosphate = 5-phospho-alpha-D-ribose 1-diphosphate + adenine. Its pathway is purine metabolism; AMP biosynthesis via salvage pathway; AMP from adenine: step 1/1. Catalyzes a salvage reaction resulting in the formation of AMP, that is energically less costly than de novo synthesis. The polypeptide is Adenine phosphoribosyltransferase (Cereibacter sphaeroides (strain KD131 / KCTC 12085) (Rhodobacter sphaeroides)).